The chain runs to 215 residues: Ribose-5-phosphate isomerase A (215 aa).

Substrate-binding positions include threonine 26 to threonine 29, aspartate 79 to aspartate 82, and lysine 92 to glycine 95. Catalysis depends on glutamate 101, which acts as the Proton acceptor. Substrate is bound at residue lysine 119.

The protein belongs to the ribose 5-phosphate isomerase family. As to quaternary structure, homodimer.

It catalyses the reaction aldehydo-D-ribose 5-phosphate = D-ribulose 5-phosphate. It participates in carbohydrate degradation; pentose phosphate pathway; D-ribose 5-phosphate from D-ribulose 5-phosphate (non-oxidative stage): step 1/1. Functionally, catalyzes the reversible conversion of ribose-5-phosphate to ribulose 5-phosphate. The protein is Ribose-5-phosphate isomerase A of Xanthomonas euvesicatoria pv. vesicatoria (strain 85-10) (Xanthomonas campestris pv. vesicatoria).